The following is a 312-amino-acid chain: Glyoxylate/hydroxypyruvate reductase A (312 aa).

Arginine 227 is an active-site residue. Residue histidine 275 is the Proton donor of the active site.

Belongs to the D-isomer specific 2-hydroxyacid dehydrogenase family. GhrA subfamily.

It is found in the cytoplasm. It catalyses the reaction glycolate + NADP(+) = glyoxylate + NADPH + H(+). The catalysed reaction is (R)-glycerate + NAD(+) = 3-hydroxypyruvate + NADH + H(+). It carries out the reaction (R)-glycerate + NADP(+) = 3-hydroxypyruvate + NADPH + H(+). Functionally, catalyzes the NADPH-dependent reduction of glyoxylate and hydroxypyruvate into glycolate and glycerate, respectively. This is Glyoxylate/hydroxypyruvate reductase A from Escherichia coli O7:K1 (strain IAI39 / ExPEC).